Consider the following 287-residue polypeptide: Genetic interactor of prohibitin 7, mitochondrial (287 aa).

The transit peptide at 1–24 (MVLSNVKIFRLKSHRAFRIGPMIK) directs the protein to the mitochondrion. The helical transmembrane segment at 250 to 266 (SKAIISFVVFVSIYVWL) threads the bilayer.

It belongs to the GEP7 family.

Its subcellular location is the mitochondrion membrane. In terms of biological role, involved in respiratory growth and required for cell survival in the absence of prohibitins or GEM1. This chain is Genetic interactor of prohibitin 7, mitochondrial (GEP7), found in Saccharomyces cerevisiae (strain ATCC 204508 / S288c) (Baker's yeast).